The chain runs to 232 residues: Phosphoribosylaminoimidazole-succinocarboxamide synthase (232 aa).

Belongs to the SAICAR synthetase family.

The enzyme catalyses 5-amino-1-(5-phospho-D-ribosyl)imidazole-4-carboxylate + L-aspartate + ATP = (2S)-2-[5-amino-1-(5-phospho-beta-D-ribosyl)imidazole-4-carboxamido]succinate + ADP + phosphate + 2 H(+). It functions in the pathway purine metabolism; IMP biosynthesis via de novo pathway; 5-amino-1-(5-phospho-D-ribosyl)imidazole-4-carboxamide from 5-amino-1-(5-phospho-D-ribosyl)imidazole-4-carboxylate: step 1/2. This Finegoldia magna (strain ATCC 29328 / DSM 20472 / WAL 2508) (Peptostreptococcus magnus) protein is Phosphoribosylaminoimidazole-succinocarboxamide synthase.